A 300-amino-acid polypeptide reads, in one-letter code: Hemagglutinin 1 (300 aa).

The chain crosses the membrane as a helical span at residues 200–221 (FIFATVVFIFLQAGRVPEIIAD).

It is found in the cell membrane. Induces agglutination of neuraminidase-treated erythrocytes. This chain is Hemagglutinin 1 (hag1), found in Eikenella corrodens.